The following is a 548-amino-acid chain: Natural resistance-associated macrophage protein 1 (548 aa).

Polar residues predominate over residues Met1–Gly11. A disordered region spans residues Met1–Glu38. The Cytoplasmic portion of the chain corresponds to Met1–Leu55. The helical transmembrane segment at Trp56–Gly73 threads the bilayer. The Extracellular segment spans residues Asn74–Gly82. A helical transmembrane segment spans residues Ala83–Leu102. The Cytoplasmic portion of the chain corresponds to Cys103–Glu139. Residues Leu140–Leu160 traverse the membrane as a helical segment. The Extracellular segment spans residues Ser161 to Arg164. The helical transmembrane segment at Ile165–Leu184 threads the bilayer. The Cytoplasmic segment spans residues Asp185–Glu193. Residues Ala194 to Ala214 form a helical membrane-spanning segment. Residues Gln215–Glu237 lie on the Extracellular side of the membrane. The chain crosses the membrane as a helical span at residues Leu238–Leu256. Residues His257 to Glu284 lie on the Cytoplasmic side of the membrane. Residues Ala285–Gly304 traverse the membrane as a helical segment. Residues Gln305 to Gly346 are Extracellular-facing. An N-linked (GlcNAc...) asparagine glycan is attached at Asn335. A helical membrane pass occupies residues Val347–Leu366. Over Ala367 to Arg397 the chain is Cytoplasmic. A helical transmembrane segment spans residues Val398–Phe415. Topologically, residues Arg416–Asp426 are extracellular. The helical transmembrane segment at Leu427 to Thr447 threads the bilayer. Residues Ser448 to Lys463 are Cytoplasmic-facing. The helical transmembrane segment at Val464–Val485 threads the bilayer. Over Pro486–Tyr493 the chain is Extracellular. The helical transmembrane segment at Phe494 to Trp513 threads the bilayer. The Cytoplasmic segment spans residues Thr514–Gly548.

The protein belongs to the NRAMP family.

The protein localises to the late endosome membrane. It localises to the lysosome membrane. It catalyses the reaction Zn(2+)(in) + H(+)(out) = Zn(2+)(out) + H(+)(in). The enzyme catalyses Fe(2+)(in) + H(+)(out) = Fe(2+)(out) + H(+)(in). It carries out the reaction Mn(2+)(in) + H(+)(out) = Mn(2+)(out) + H(+)(in). Macrophage-specific antiporter that fluxes metal ions in either direction against a proton gradient. Localized to late endosomal lysosomal membranes, delivers bivalent cations from the cytosol into these acidic compartments where they may directly affect antimicrobial activity. Involved in iron metabolism and host natural resistance to infection with intracellular parasites. Pathogen resistance involves sequestration of Fe(2+) and Mn(2+), cofactors of both prokaryotic and eukaryotic catalases and superoxide dismutases, not only to protect the macrophage against its own generation of reactive oxygen species, but to deny the cations to the pathogen for synthesis of its protective enzymes. This chain is Natural resistance-associated macrophage protein 1 (SLC11A1), found in Bubalus bubalis (Domestic water buffalo).